A 483-amino-acid chain; its full sequence is tRNA sulfurtransferase (483 aa).

The THUMP domain occupies 61–165 (AEVLEILTTT…DELLNQVIAR (105 aa)). Residues 183 to 184 (LI), K265, G287, and Q296 each bind ATP. Residues C344 and C457 are joined by a disulfide bond. Residues 405-483 (EEGNAVVLDI…GFNNVKVYRP (79 aa)) enclose the Rhodanese domain. The Cysteine persulfide intermediate role is filled by C457.

This sequence belongs to the ThiI family.

Its subcellular location is the cytoplasm. The catalysed reaction is [ThiI sulfur-carrier protein]-S-sulfanyl-L-cysteine + a uridine in tRNA + 2 reduced [2Fe-2S]-[ferredoxin] + ATP + H(+) = [ThiI sulfur-carrier protein]-L-cysteine + a 4-thiouridine in tRNA + 2 oxidized [2Fe-2S]-[ferredoxin] + AMP + diphosphate. It catalyses the reaction [ThiS sulfur-carrier protein]-C-terminal Gly-Gly-AMP + S-sulfanyl-L-cysteinyl-[cysteine desulfurase] + AH2 = [ThiS sulfur-carrier protein]-C-terminal-Gly-aminoethanethioate + L-cysteinyl-[cysteine desulfurase] + A + AMP + 2 H(+). It functions in the pathway cofactor biosynthesis; thiamine diphosphate biosynthesis. In terms of biological role, catalyzes the ATP-dependent transfer of a sulfur to tRNA to produce 4-thiouridine in position 8 of tRNAs, which functions as a near-UV photosensor. Also catalyzes the transfer of sulfur to the sulfur carrier protein ThiS, forming ThiS-thiocarboxylate. This is a step in the synthesis of thiazole, in the thiamine biosynthesis pathway. The sulfur is donated as persulfide by IscS. The chain is tRNA sulfurtransferase from Vibrio cholerae serotype O1 (strain ATCC 39315 / El Tor Inaba N16961).